Here is an 81-residue protein sequence, read N- to C-terminus: Photosystem I iron-sulfur center (81 aa).

4Fe-4S ferredoxin-type domains are found at residues 2-31 and 39-68; these read AHSV…MIPW and IASA…VRVY. Positions 11, 14, 17, 21, 48, 51, 54, and 58 each coordinate [4Fe-4S] cluster.

In terms of assembly, the eukaryotic PSI reaction center is composed of at least 11 subunits. It depends on [4Fe-4S] cluster as a cofactor.

The protein localises to the plastid. Its subcellular location is the chloroplast thylakoid membrane. It carries out the reaction reduced [plastocyanin] + hnu + oxidized [2Fe-2S]-[ferredoxin] = oxidized [plastocyanin] + reduced [2Fe-2S]-[ferredoxin]. Apoprotein for the two 4Fe-4S centers FA and FB of photosystem I (PSI); essential for photochemical activity. FB is the terminal electron acceptor of PSI, donating electrons to ferredoxin. The C-terminus interacts with PsaA/B/D and helps assemble the protein into the PSI complex. Required for binding of PsaD and PsaE to PSI. PSI is a plastocyanin-ferredoxin oxidoreductase, converting photonic excitation into a charge separation, which transfers an electron from the donor P700 chlorophyll pair to the spectroscopically characterized acceptors A0, A1, FX, FA and FB in turn. The protein is Photosystem I iron-sulfur center of Zygnema circumcarinatum (Green alga).